An 88-amino-acid chain; its full sequence is Small ribosomal subunit protein bS20 (88 aa).

It belongs to the bacterial ribosomal protein bS20 family.

Functionally, binds directly to 16S ribosomal RNA. In Clostridioides difficile (strain 630) (Peptoclostridium difficile), this protein is Small ribosomal subunit protein bS20.